A 518-amino-acid polypeptide reads, in one-letter code: Arrestin-related trafficking adapter 10 (518 aa).

Lys-118 is covalently cross-linked (Glycyl lysine isopeptide (Lys-Gly) (interchain with G-Cter in ubiquitin)).

This sequence belongs to the ART10 family. As to quaternary structure, interacts with RSP5. In terms of processing, ubiquitinated by RSP5.

It is found in the cytoplasm. Functionally, may regulate endocytosis by recruiting RSP5 ubiquitin ligase activity to specific plasma membrane proteins in response to extracellular stimuli. This is Arrestin-related trafficking adapter 10 (ART10) from Saccharomyces cerevisiae (strain ATCC 204508 / S288c) (Baker's yeast).